We begin with the raw amino-acid sequence, 365 residues long: 3,4-dihydroxy-2-butanone 4-phosphate synthase (365 aa).

The DHBP synthase stretch occupies residues 1–201; sequence MALNTIDELI…IADLIHYRLI (201 aa). D-ribulose 5-phosphate-binding positions include 27–28, D32, 140–144, and E164; these read RE and RAGHT. E28 provides a ligand contact to Mg(2+). H143 lines the Mg(2+) pocket. The segment at 202–365 is GTP cyclohydrolase II-like; that stretch reads HERTVERIAE…LEVVEYLPAE (164 aa).

This sequence in the N-terminal section; belongs to the DHBP synthase family. The protein in the C-terminal section; belongs to the GTP cyclohydrolase II family. The cofactor is Mg(2+). Mn(2+) serves as cofactor.

The catalysed reaction is D-ribulose 5-phosphate = (2S)-2-hydroxy-3-oxobutyl phosphate + formate + H(+). It functions in the pathway cofactor biosynthesis; riboflavin biosynthesis; 2-hydroxy-3-oxobutyl phosphate from D-ribulose 5-phosphate: step 1/1. Catalyzes the conversion of D-ribulose 5-phosphate to formate and 3,4-dihydroxy-2-butanone 4-phosphate. This chain is 3,4-dihydroxy-2-butanone 4-phosphate synthase (ribB), found in Pseudomonas aeruginosa (strain ATCC 15692 / DSM 22644 / CIP 104116 / JCM 14847 / LMG 12228 / 1C / PRS 101 / PAO1).